We begin with the raw amino-acid sequence, 157 residues long: Ribosome maturation factor RimP (157 aa).

Belongs to the RimP family.

It localises to the cytoplasm. Functionally, required for maturation of 30S ribosomal subunits. In Levilactobacillus brevis (strain ATCC 367 / BCRC 12310 / CIP 105137 / JCM 1170 / LMG 11437 / NCIMB 947 / NCTC 947) (Lactobacillus brevis), this protein is Ribosome maturation factor RimP.